The following is a 92-amino-acid chain: Putative septation protein SpoVG (92 aa).

This sequence belongs to the SpoVG family.

In terms of biological role, could be involved in septation. The polypeptide is Putative septation protein SpoVG (Clostridium botulinum (strain Eklund 17B / Type B)).